The chain runs to 689 residues: Pyocin-S2 (689 aa).

Zn(2+)-binding residues include histidine 656, histidine 681, and histidine 685.

Belongs to the colicin/pyosin nuclease family. In terms of assembly, purified pyocin S2 makes up a complex of the two (large and small) proteins. The large protein, but not the pyocin complex, shows in vitro DNase activity.

Its function is as follows. Causes breakdown of chromosomal DNA as well as complete inhibition of lipid synthesis in sensitive cells. This chain is Pyocin-S2 (pys2), found in Pseudomonas aeruginosa (strain ATCC 15692 / DSM 22644 / CIP 104116 / JCM 14847 / LMG 12228 / 1C / PRS 101 / PAO1).